Reading from the N-terminus, the 706-residue chain is DNA ligase (706 aa).

A disordered region spans residues 1 to 20; it reads MSATAGTADESGVASAAASA. Residues 50–54, 99–100, and Glu-128 contribute to the NAD(+) site; these read DAEYD and SL. Lys-130 functions as the N6-AMP-lysine intermediate in the catalytic mechanism. Arg-151, Glu-188, Lys-304, and Lys-328 together coordinate NAD(+). 4 residues coordinate Zn(2+): Cys-422, Cys-425, Cys-440, and Cys-446. Residues 604-694 form the BRCT domain; that stretch reads EGPRPLDGVT…VDAASKLAVP (91 aa).

It belongs to the NAD-dependent DNA ligase family. LigA subfamily. The cofactor is Mg(2+). Mn(2+) serves as cofactor.

It carries out the reaction NAD(+) + (deoxyribonucleotide)n-3'-hydroxyl + 5'-phospho-(deoxyribonucleotide)m = (deoxyribonucleotide)n+m + AMP + beta-nicotinamide D-nucleotide.. DNA ligase that catalyzes the formation of phosphodiester linkages between 5'-phosphoryl and 3'-hydroxyl groups in double-stranded DNA using NAD as a coenzyme and as the energy source for the reaction. It is essential for DNA replication and repair of damaged DNA. This Frankia casuarinae (strain DSM 45818 / CECT 9043 / HFP020203 / CcI3) protein is DNA ligase.